Consider the following 2395-residue polypeptide: Centrosomal protein of 295 kDa (2395 aa).

The segment at 1–540 (MKRKVMNGKL…KQADHLEVRP (540 aa)) is necessary for centriole targeting and microtubule association. Residue Ser13 is modified to Phosphoserine. Coiled-coil stretches lie at residues 53-84 (QRRNQQVSHLAEELRAEWEEAQSQKIQNLEKL), 114-148 (AERKTKAEARHKEALKAQKKQKEMLMKQKTRHIKA), 209-277 (DAHL…KRQT), 488-538 (ARHK…HLEV), and 567-592 (QQNRLHKQTVETARKRLLEYQTVLKE). Disordered regions lie at residues 602-643 (LIPD…PVQP), 660-681 (GHIPQRQGETARAKQSVESQER), and 735-764 (SDSQQISSEDSENISSKPTEPSSSLPLMPE). Phosphoserine is present on Ser634. A compositionally biased stretch (low complexity) spans 735–750 (SDSQQISSEDSENISS). Positions 817–848 (GQLELQKKVLQERQEAQEKLLSCTQKELEEQT) form a coiled coil. Disordered regions lie at residues 864–893 (SLPSASAESGNIQTSSTKSDATVSSDSMDN), 966–986 (ADTQSRKIQKPPLPTNKKGLL), and 1212–1272 (VDPE…SKVT). Residues 1219-1250 (FQFSPQTQENRSSQQTGFSSFTPSLRQPSCVS) are compositionally biased toward polar residues. The stretch at 1444 to 1488 (HDDLQALQQQLDVHREAIRSCQDIQEELLLQRLNKLEQRVSSKQI) forms a coiled coil. Position 1565 is a phosphoserine (Ser1565). Low complexity predominate over residues 1677–1692 (PWGDSSQGSSSGDQPG). Disordered regions lie at residues 1677–1715 (PWGDSSQGSSSGDQPGAAAVHAEHSGESLGKELSGRASK), 1819–1845 (SEEEEEEEACTNLSPLMKPDDEVETQE), 1875–1899 (ESFSEQTEHQEQESSSKEEETGSLS), 1989–2013 (DLSSPGTSQEDRDFYQQNSESSSEK), and 2354–2395 (NKTP…SQCI). A compositionally biased stretch (basic and acidic residues) spans 1697–1710 (HAEHSGESLGKELS). A compositionally biased stretch (basic and acidic residues) spans 1880-1894 (QTEHQEQESSSKEEE). The tract at residues 2329–2395 (SLGEAFMKRK…TAKRNRSQCI (67 aa)) is ALMS motif. Positions 2376-2388 (HLKEAVSGDETAK) are enriched in basic and acidic residues.

In terms of assembly, interacts (via ALMS motif) with microtubules; this interaction is direct.

The protein localises to the cytoplasm. It localises to the cytoskeleton. Its subcellular location is the microtubule organizing center. It is found in the centrosome. The protein resides in the centriole. The protein localises to the spindle. Functionally, centriole-enriched microtubule-binding protein involved in centriole biogenesis. Essential for the generation of the distal portion of new-born centrioles in a CPAP- and CEP120-mediated elongation dependent manner during the cell cycle S/G2 phase after formation of the initiating cartwheel structure. Required for the recruitment of centriolar proteins, such as POC1B, POC5 and CEP135, into the distal portion of centrioles. Also required for centriole-to-centrosome conversion during mitotic progression, but is dispensable for cartwheel removal or centriole disengagement. Binds to and stabilizes centriolar microtubule. May be involved in ciliogenesis. This is Centrosomal protein of 295 kDa from Rattus norvegicus (Rat).